The sequence spans 934 residues: Protein translocase subunit SecA (934 aa).

ATP-binding positions include glutamine 90, 108-112, and aspartate 509; that span reads GEGKT. A disordered region spans residues 535-565; sequence PEEDHTPPVPLQRSAPGGFSDAAAPSLPRSG.

It belongs to the SecA family. Monomer and homodimer. Part of the essential Sec protein translocation apparatus which comprises SecA, SecYEG and auxiliary proteins SecDF. Other proteins may also be involved.

It localises to the cell inner membrane. The protein resides in the cellular thylakoid membrane. The protein localises to the cytoplasm. It catalyses the reaction ATP + H2O + cellular proteinSide 1 = ADP + phosphate + cellular proteinSide 2.. Functionally, part of the Sec protein translocase complex. Interacts with the SecYEG preprotein conducting channel. Has a central role in coupling the hydrolysis of ATP to the transfer of proteins into and across the cell membrane, serving as an ATP-driven molecular motor driving the stepwise translocation of polypeptide chains across the membrane. Probably participates in protein translocation into and across both the cytoplasmic and thylakoid membranes in cyanobacterial cells. The sequence is that of Protein translocase subunit SecA from Synechococcus sp. (strain CC9605).